A 508-amino-acid polypeptide reads, in one-letter code: Bifunctional purine biosynthesis protein PurH (508 aa).

The region spanning 1 to 145 is the MGS-like domain; it reads MIKRALLSTY…KNYKDVIVVV (145 aa).

This sequence belongs to the PurH family.

It carries out the reaction (6R)-10-formyltetrahydrofolate + 5-amino-1-(5-phospho-beta-D-ribosyl)imidazole-4-carboxamide = 5-formamido-1-(5-phospho-D-ribosyl)imidazole-4-carboxamide + (6S)-5,6,7,8-tetrahydrofolate. The enzyme catalyses IMP + H2O = 5-formamido-1-(5-phospho-D-ribosyl)imidazole-4-carboxamide. Its pathway is purine metabolism; IMP biosynthesis via de novo pathway; 5-formamido-1-(5-phospho-D-ribosyl)imidazole-4-carboxamide from 5-amino-1-(5-phospho-D-ribosyl)imidazole-4-carboxamide (10-formyl THF route): step 1/1. It participates in purine metabolism; IMP biosynthesis via de novo pathway; IMP from 5-formamido-1-(5-phospho-D-ribosyl)imidazole-4-carboxamide: step 1/1. The polypeptide is Bifunctional purine biosynthesis protein PurH (Petrotoga mobilis (strain DSM 10674 / SJ95)).